The sequence spans 151 residues: Deoxyuridine 5'-triphosphate nucleotidohydrolase (151 aa).

Substrate contacts are provided by residues 70-72 (RSG), Asn-83, and 87-89 (LID).

The protein belongs to the dUTPase family. It depends on Mg(2+) as a cofactor.

It catalyses the reaction dUTP + H2O = dUMP + diphosphate + H(+). It participates in pyrimidine metabolism; dUMP biosynthesis; dUMP from dCTP (dUTP route): step 2/2. Functionally, this enzyme is involved in nucleotide metabolism: it produces dUMP, the immediate precursor of thymidine nucleotides and it decreases the intracellular concentration of dUTP so that uracil cannot be incorporated into DNA. This chain is Deoxyuridine 5'-triphosphate nucleotidohydrolase, found in Methylococcus capsulatus (strain ATCC 33009 / NCIMB 11132 / Bath).